A 63-amino-acid polypeptide reads, in one-letter code: Cecropin-2 (63 aa).

The first 21 residues, 1–21 (MNFNKVLVLLAVIFAVFAGQT), serve as a signal peptide directing secretion. The propeptide occupies 22–23 (EA). K62 is modified (lysine amide).

This sequence belongs to the cecropin family.

The protein resides in the secreted. In terms of biological role, cecropins have lytic and antibacterial activity against several Gram-positive and Gram-negative bacteria. The protein is Cecropin-2 (CEC2) of Ceratitis capitata (Mediterranean fruit fly).